The chain runs to 481 residues: Aspartyl/glutamyl-tRNA(Asn/Gln) amidotransferase subunit B (481 aa).

The protein belongs to the GatB/GatE family. GatB subfamily. Heterotrimer of A, B and C subunits.

It catalyses the reaction L-glutamyl-tRNA(Gln) + L-glutamine + ATP + H2O = L-glutaminyl-tRNA(Gln) + L-glutamate + ADP + phosphate + H(+). The catalysed reaction is L-aspartyl-tRNA(Asn) + L-glutamine + ATP + H2O = L-asparaginyl-tRNA(Asn) + L-glutamate + ADP + phosphate + 2 H(+). In terms of biological role, allows the formation of correctly charged Asn-tRNA(Asn) or Gln-tRNA(Gln) through the transamidation of misacylated Asp-tRNA(Asn) or Glu-tRNA(Gln) in organisms which lack either or both of asparaginyl-tRNA or glutaminyl-tRNA synthetases. The reaction takes place in the presence of glutamine and ATP through an activated phospho-Asp-tRNA(Asn) or phospho-Glu-tRNA(Gln). The polypeptide is Aspartyl/glutamyl-tRNA(Asn/Gln) amidotransferase subunit B (Carboxydothermus hydrogenoformans (strain ATCC BAA-161 / DSM 6008 / Z-2901)).